The following is a 151-amino-acid chain: Small ribosomal subunit protein uS15 (151 aa).

It belongs to the universal ribosomal protein uS15 family.

The chain is Small ribosomal subunit protein uS15 (RpS13) from Spodoptera frugiperda (Fall armyworm).